The primary structure comprises 147 residues: Hemoglobin subunit beta (147 aa).

The 145-residue stretch at 3 to 147 (HWSCEEKQFI…VAHALALGYH (145 aa)) folds into the Globin domain. H64 and H93 together coordinate heme b.

This sequence belongs to the globin family. As to quaternary structure, heterotetramer of two alpha-D chains and two beta chains. As to expression, red blood cells.

In terms of biological role, involved in oxygen transport from the lung to the various peripheral tissues. This chain is Hemoglobin subunit beta (HBB), found in Chelonoidis carbonarius (Red-footed tortoise).